Reading from the N-terminus, the 351-residue chain is Probable dual-specificity RNA methyltransferase RlmN (351 aa).

The Proton acceptor role is filled by glutamate 102. The Radical SAM core domain maps to 110–339 (DGGRKTICIS…ILNRRSPGKD (230 aa)). Cysteine 117 and cysteine 344 are disulfide-bonded. 3 residues coordinate [4Fe-4S] cluster: cysteine 124, cysteine 128, and cysteine 131. S-adenosyl-L-methionine contacts are provided by residues 171 to 172 (GE), serine 203, 226 to 228 (SLN), and asparagine 302. Catalysis depends on cysteine 344, which acts as the S-methylcysteine intermediate.

Belongs to the radical SAM superfamily. RlmN family. [4Fe-4S] cluster serves as cofactor.

It localises to the cytoplasm. The enzyme catalyses adenosine(2503) in 23S rRNA + 2 reduced [2Fe-2S]-[ferredoxin] + 2 S-adenosyl-L-methionine = 2-methyladenosine(2503) in 23S rRNA + 5'-deoxyadenosine + L-methionine + 2 oxidized [2Fe-2S]-[ferredoxin] + S-adenosyl-L-homocysteine. The catalysed reaction is adenosine(37) in tRNA + 2 reduced [2Fe-2S]-[ferredoxin] + 2 S-adenosyl-L-methionine = 2-methyladenosine(37) in tRNA + 5'-deoxyadenosine + L-methionine + 2 oxidized [2Fe-2S]-[ferredoxin] + S-adenosyl-L-homocysteine. Its function is as follows. Specifically methylates position 2 of adenine 2503 in 23S rRNA and position 2 of adenine 37 in tRNAs. This Leptospira borgpetersenii serovar Hardjo-bovis (strain JB197) protein is Probable dual-specificity RNA methyltransferase RlmN.